A 120-amino-acid chain; its full sequence is Chaperonin GroEL (120 aa).

23 to 27 (DGTTT) serves as a coordination point for ATP.

The protein belongs to the chaperonin (HSP60) family. As to quaternary structure, forms a cylinder of 14 subunits composed of two heptameric rings stacked back-to-back. Interacts with the co-chaperonin GroES.

The protein localises to the cytoplasm. It catalyses the reaction ATP + H2O + a folded polypeptide = ADP + phosphate + an unfolded polypeptide.. Together with its co-chaperonin GroES, plays an essential role in assisting protein folding. The GroEL-GroES system forms a nano-cage that allows encapsulation of the non-native substrate proteins and provides a physical environment optimized to promote and accelerate protein folding. The chain is Chaperonin GroEL from Mycobacterium kansasii.